We begin with the raw amino-acid sequence, 463 residues long: Dipeptidyl peptidase 1 (463 aa).

The N-terminal stretch at 1–24 (MGPWSGSRLVALLLLVYGAGSVRG) is a signal peptide. Residues asparagine 29 and asparagine 53 are each glycosylated (N-linked (GlcNAc...) asparagine). 2 disulfide bridges follow: cysteine 30/cysteine 118 and cysteine 54/cysteine 136. Positions 135 to 230 (ACFTGRKTGN…TAEIQKKILH (96 aa)) are excised as a propeptide. The N-linked (GlcNAc...) asparagine glycan is linked to asparagine 144. 3 disulfides stabilise this stretch: cysteine 255–cysteine 298, cysteine 291–cysteine 331, and cysteine 321–cysteine 337. The active site involves cysteine 258. N-linked (GlcNAc...) asparagine glycosylation occurs at asparagine 276. Chloride contacts are provided by phenylalanine 302 and tyrosine 304. Tyrosine 347 provides a ligand contact to chloride. Active-site residues include histidine 405 and asparagine 427.

This sequence belongs to the peptidase C1 family. Tetramer of heterotrimers consisting of exclusion domain, heavy- and light chains. Requires chloride as cofactor.

The protein localises to the lysosome. It catalyses the reaction Release of an N-terminal dipeptide, Xaa-Yaa-|-Zaa-, except when Xaa is Arg or Lys, or Yaa or Zaa is Pro.. Functionally, thiol protease. Has dipeptidylpeptidase activity. Active against a broad range of dipeptide substrates composed of both polar and hydrophobic amino acids. Proline cannot occupy the P1 position and arginine cannot occupy the P2 position of the substrate. Can act as both an exopeptidase and endopeptidase. Activates serine proteases such as elastase, cathepsin G and granzymes A and B. In Bos taurus (Bovine), this protein is Dipeptidyl peptidase 1 (CTSC).